We begin with the raw amino-acid sequence, 314 residues long: Methylglutaconyl-CoA hydratase, mitochondrial (314 aa).

The N-terminal 42 residues, 1–42, are a transit peptide targeting the mitochondrion; that stretch reads MAAAAPGALGALRTGRVRLVAACCARLGPAAWARGTAPRRGY. Lys75 is subject to N6-acetyllysine; alternate. Lys75 carries the N6-succinyllysine; alternate modification. Residues 80 to 94 form an RNA-binding region; that stretch reads KNLLKMLSKAVDALK. Lys84 is modified (N6-succinyllysine). Lys88 and Lys119 each carry N6-acetyllysine; alternate. Residues Lys88 and Lys119 each carry the N6-succinyllysine; alternate modification. N6-succinyllysine is present on residues Lys123 and Lys135. N6-acetyllysine; alternate occurs at positions 179 and 186. N6-succinyllysine; alternate occurs at positions 179 and 186. Residue Lys304 is modified to N6-succinyllysine.

The protein belongs to the enoyl-CoA hydratase/isomerase family. In terms of assembly, homohexamer. As to expression, detected in heart, brain, liver, spleen, skeletal muscle and kidney. Expressed in brain, kidney, liver and spleen tissue (at protein level).

Its subcellular location is the mitochondrion. The catalysed reaction is (3S)-3-hydroxy-3-methylglutaryl-CoA = 3-methyl-(2E)-glutaconyl-CoA + H2O. It carries out the reaction (3S)-citramalyl-CoA = itaconyl-CoA + H2O. The enzyme catalyses 3-hydroxyisovaleryl-CoA = 3-methylbut-2-enoyl-CoA + H2O. It catalyses the reaction (S)-3-hydroxyglutaryl-CoA = (2E)-glutaconyl-CoA + H2O. It functions in the pathway amino-acid degradation; L-leucine degradation; (S)-3-hydroxy-3-methylglutaryl-CoA from 3-isovaleryl-CoA: step 3/3. Functionally, catalyzes the fifth step in the leucine degradation pathway, the reversible hydration of 3-methylglutaconyl-CoA (3-MG-CoA) to 3-hydroxy-3-methylglutaryl-CoA (HMG-CoA). Can catalyze the reverse reaction but at a much lower rate in vitro. HMG-CoA is then quickly degraded by another enzyme (such as HMG-CoA lyase) to give acetyl-CoA and acetoacetate. Uses other substrates such as (2E)-glutaconyl-CoA efficiently in vitro, and to a lesser extent 3-methylcrotonyl-CoA (3-methyl-(2E)-butenoyl-CoA), crotonyl-CoA ((2E)-butenoyl-CoA) and 3-hydroxybutanoyl-CoA (the missing carboxylate reduces affinity to the active site). Originally it was identified as an RNA-binding protein as it binds to AU-rich elements (AREs) in vitro. AREs direct rapid RNA degradation and mRNA deadenylation. Might have itaconyl-CoA hydratase activity, converting itaconyl-CoA into citramalyl-CoA in the C5-dicarboxylate catabolism pathway. The C5-dicarboxylate catabolism pathway is required to detoxify itaconate, an antimicrobial metabolite and immunomodulator produced by macrophages during certain infections, that can act as a vitamin B12-poisoning metabolite. In Mus musculus (Mouse), this protein is Methylglutaconyl-CoA hydratase, mitochondrial (Auh).